A 299-amino-acid polypeptide reads, in one-letter code: UBX domain-containing protein 1 (299 aa).

3 disordered regions span residues 39-61 (AGVP…SGAP), 127-176 (KAKL…NEDE), and 191-218 (EARK…APPK). A compositionally biased stretch (low complexity) spans 46–61 (DAPAQAAPGAADSGAP). Residues 111–179 (AKVLEIREKI…REKNEDEIAR (69 aa)) adopt a coiled-coil conformation. Over residues 128 to 176 (AKLEAEENREKEKKRREDGKAMISHKEAARDREIREAAQDRRREKNEDE) the composition is skewed to basic and acidic residues. Residues 201–213 (PVPEAKPAPSAAP) show a composition bias toward low complexity. The 78-residue stretch at 218 to 295 (KDYSTTTLQF…NLVPSANVIL (78 aa)) folds into the UBX domain.

Interacts with cdc-48.1 (via N-terminus) and cdc-48.2 (via N-terminus) in vitro; the interaction with cdc-48.1 is not detected in vivo. As to expression, expressed in the germline (at protein level). Expressed in spermatocytes but not in mature sperm (at protein level). Ubiquitously expressed. Predominantly expressed in the spermatheca.

The protein resides in the cytoplasm. The protein localises to the perinuclear region. Ubiquitin-binding protein which acts as an adapter for ATPase cdc-48.1 and/or cdc-48.2, conferring substrate specificity. Together with ubxn-2 and ubxn-3, plays a role in hermaphrodite spermatogenesis probably by promoting the degradation of sex determination terminal factor tra-1. This is UBX domain-containing protein 1 from Caenorhabditis elegans.